The primary structure comprises 78 residues: Small ribosomal subunit protein bS18 (78 aa).

The protein belongs to the bacterial ribosomal protein bS18 family. Part of the 30S ribosomal subunit. Forms a tight heterodimer with protein bS6.

Functionally, binds as a heterodimer with protein bS6 to the central domain of the 16S rRNA, where it helps stabilize the platform of the 30S subunit. This chain is Small ribosomal subunit protein bS18, found in Kineococcus radiotolerans (strain ATCC BAA-149 / DSM 14245 / SRS30216).